The sequence spans 588 residues: Disabled homolog 1 (588 aa).

The interval 1-26 is disordered; that stretch reads MSTETELQVAVKTSAKKDSRKKGQDR. The span at 15–26 shows a compositional bias: basic and acidic residues; that stretch reads AKKDSRKKGQDR. Positions 36-189 constitute a PID domain; sequence KGEGVRYKAK…CEQAVYQTIL (154 aa). 3 positions are modified to phosphotyrosine: Tyr198, Tyr220, and Tyr232. Disordered stretches follow at residues 417–443, 451–470, and 502–588; these read LTPLATVPGTSDSTRSSPQTDKPRQKM, FQMAQPPPVPSRKPDQPSLT, and LTPV…QAGS. Residues 424-436 show a composition bias toward polar residues; the sequence is PGTSDSTRSSPQT. Composition is skewed to low complexity over residues 503-512 and 520-534; these read TPVTSTTPST and PRQSSPSKSSASHAS. Phosphoserine; by CDK5 is present on Ser524. The span at 537 to 546 shows a compositional bias: acidic residues; the sequence is TTDDIFEEGF.

Associates with the SH2 domains of SRC, FYN and ABL. Interacts (phosphorylated on tyrosine residues) with CRK and CRKL (via respective SH2 domain). Interacts with SIAH1, LRP8 and VLDLR. Interacts with LRP1. Interacts with APLP1 (via NPXY motif). Interacts with DAB2IP. Interacts with ZSWIM8. In terms of processing, phosphorylated by FYN on Tyr-198 and Tyr-220 upon reelin induction in embryonic neurons. Also phosphorylated on Ser-524 independently of reelin signaling. Ubiquitinated by various cullin-5-RING E3 ubiquitin-protein ligase complexes (ECS complexes) following ligand-binding and phosphorylation, leading to its degradation. Ubiquitinated by the ECS(SOCS7) complex in the cortical plate of the developing cerebral cortex following ligand-binding and phosphorylation by FYN, leading to its degradation by the proteasome. Recognized by ZSWIM8 through a disorder targets misorder mechanism that eliminates misfolded DAB1 via ubiquitination and proteasomal degradation. In terms of tissue distribution, mainly expressed in brain.

The protein localises to the cytoplasm. Functionally, signaling adapter of the reelin-mediated signaling pathway, which regulates the migration and differentiation of postmitotic neurons during brain development. Mediates intracellular transduction of Reelin signaling following reelin (RELN)-binding to its receptor: acts by docking proteins through its phosphotyrosine residues and PID domain. This chain is Disabled homolog 1 (DAB1), found in Homo sapiens (Human).